The following is a 396-amino-acid chain: Imidazolonepropionase (396 aa).

Positions 70 and 72 each coordinate Fe(3+). Positions 70 and 72 each coordinate Zn(2+). Arg79, Tyr137, and His164 together coordinate 4-imidazolone-5-propanoate. N-formimidoyl-L-glutamate is bound at residue Tyr137. Position 227 (His227) interacts with Fe(3+). His227 contributes to the Zn(2+) binding site. Gln230 is a binding site for 4-imidazolone-5-propanoate. Asp301 serves as a coordination point for Fe(3+). Asp301 contacts Zn(2+). Residues Asn303 and Gly305 each contribute to the N-formimidoyl-L-glutamate site. Ser306 is a binding site for 4-imidazolone-5-propanoate.

Belongs to the metallo-dependent hydrolases superfamily. HutI family. Zn(2+) serves as cofactor. Requires Fe(3+) as cofactor.

It localises to the cytoplasm. It catalyses the reaction 4-imidazolone-5-propanoate + H2O = N-formimidoyl-L-glutamate. It participates in amino-acid degradation; L-histidine degradation into L-glutamate; N-formimidoyl-L-glutamate from L-histidine: step 3/3. Its function is as follows. Catalyzes the hydrolytic cleavage of the carbon-nitrogen bond in imidazolone-5-propanoate to yield N-formimidoyl-L-glutamate. It is the third step in the universal histidine degradation pathway. In Mycolicibacterium smegmatis (strain ATCC 700084 / mc(2)155) (Mycobacterium smegmatis), this protein is Imidazolonepropionase.